We begin with the raw amino-acid sequence, 164 residues long: Nucleotide-binding protein Emin_0136 (164 aa).

This sequence belongs to the YajQ family.

Nucleotide-binding protein. The protein is Nucleotide-binding protein Emin_0136 of Elusimicrobium minutum (strain Pei191).